The chain runs to 258 residues: Tryptophan synthase alpha chain (258 aa).

Active-site proton acceptor residues include glutamate 47 and aspartate 58.

Belongs to the TrpA family. As to quaternary structure, tetramer of two alpha and two beta chains.

It catalyses the reaction (1S,2R)-1-C-(indol-3-yl)glycerol 3-phosphate + L-serine = D-glyceraldehyde 3-phosphate + L-tryptophan + H2O. The protein operates within amino-acid biosynthesis; L-tryptophan biosynthesis; L-tryptophan from chorismate: step 5/5. Functionally, the alpha subunit is responsible for the aldol cleavage of indoleglycerol phosphate to indole and glyceraldehyde 3-phosphate. This Bacillus cereus (strain ATCC 10987 / NRS 248) protein is Tryptophan synthase alpha chain.